Reading from the N-terminus, the 517-residue chain is Forkhead box protein N4 (517 aa).

A DNA-binding region (fork-head) is located at residues 193–289 (KPIYSYSCLI…EEMHKWKRKD (97 aa)). 2 disordered regions span residues 365–398 (VQPQ…LPHP) and 497–517 (SGTS…IALL).

It localises to the nucleus. Transcription factor essential for neural and some non-neural tissues development, such as retina and lung respectively. Binds to an 11-bp consensus sequence containing the invariant tetranucleotide 5'-ACGC-3'. During development of the central nervous system, is required to specify the amacrine and horizontal cell fates from multipotent retinal progenitors while suppressing the alternative photoreceptor cell fates through activating DLL4-NOTCH signaling. Also acts synergistically with ASCL1/MASH1 to activate DLL4-NOTCH signaling and drive commitment of p2 progenitors to the V2b interneuron fates during spinal cord neurogenesis. In development of non-neural tissues, plays an essential role in the specification of the atrioventricular canal and is indirectly required for patterning the distal airway during lung development. The sequence is that of Forkhead box protein N4 (FOXN4) from Homo sapiens (Human).